The chain runs to 602 residues: Elongation factor 4 (602 aa).

Positions 7–189 (NNIRNFSIIA…RILTAVPPPQ (183 aa)) constitute a tr-type G domain. GTP contacts are provided by residues 19–24 (DHGKST) and 136–139 (NKID).

This sequence belongs to the TRAFAC class translation factor GTPase superfamily. Classic translation factor GTPase family. LepA subfamily.

The protein resides in the cell inner membrane. It carries out the reaction GTP + H2O = GDP + phosphate + H(+). Functionally, required for accurate and efficient protein synthesis under certain stress conditions. May act as a fidelity factor of the translation reaction, by catalyzing a one-codon backward translocation of tRNAs on improperly translocated ribosomes. Back-translocation proceeds from a post-translocation (POST) complex to a pre-translocation (PRE) complex, thus giving elongation factor G a second chance to translocate the tRNAs correctly. Binds to ribosomes in a GTP-dependent manner. In Protochlamydia amoebophila (strain UWE25), this protein is Elongation factor 4.